Here is a 1549-residue protein sequence, read N- to C-terminus: ATP-binding cassette sub-family C member 9 (1549 aa).

The Extracellular segment spans residues 1–30 (MSLSFCGNNISSYNINDGVLQNSCFVDALN). Residue Asn9 is glycosylated (N-linked (GlcNAc...) asparagine). A helical transmembrane segment spans residues 31 to 51 (LVPHVFLLFITFPILFIGWGS). The Cytoplasmic segment spans residues 52 to 72 (QSSKVQIHHNTWLHFPGHNLR). The helical transmembrane segment at 73–93 (WILTFALLFVHVCEIAEGIVS) threads the bilayer. Topologically, residues 94-101 (DSRRESRH) are extracellular. A helical transmembrane segment spans residues 102-122 (LHLFMPAVMGFVATTTSIVYY). Over 123-132 (HNIETSNFPK) the chain is Cytoplasmic. A helical membrane pass occupies residues 133–153 (LLLALFLYWVMAFITKTIKLV). The Extracellular portion of the chain corresponds to 154-167 (KYCQSGLDISNLRF). Residues 168–188 (CITGMMVILNGLLMAVEINVI) traverse the membrane as a helical segment. The Cytoplasmic segment spans residues 189-301 (RVRRYVFFMN…AFGRPILLSS (113 aa)). In terms of domain architecture, ABC transmembrane type-1 1 spans 297-597 (ILLSSTFRYL…LSTVVRFAVK (301 aa)). A helical membrane pass occupies residues 302-322 (TFRYLADLLGFAGPLCISGIV). Over 323–350 (QRVNETQNGTNNTTGISETLSSKEFLEN) the chain is Extracellular. N-linked (GlcNAc...) asparagine glycans are attached at residues Asn326, Asn330, Asn333, and Asn334. The helical transmembrane segment at 351–371 (AYVLAVLLFLALILQRTFLQA) threads the bilayer. Topologically, residues 372–423 (SYYVTIETGINLRGALLAMIYNKILRLSTSNLSMGEMTLGQINNLVAIETNQ) are cytoplasmic. The chain crosses the membrane as a helical span at residues 424-444 (LMWFLFLCPNLWAMPVQIIMG). Topologically, residues 445 to 455 (VILLYNLLGSS) are extracellular. A helical transmembrane segment spans residues 456–476 (ALVGAAVIVLLAPIQYFIATK). Residues 477 to 531 (LAEAQKSTLDYSTERLKKTNEILKGIKLLKLYAWEHIFCKSVEETRMKELSSLKT) lie on the Cytoplasmic side of the membrane. Residues 532–552 (FALYTSLSIFMNAAIPIAAVL) form a helical membrane-spanning segment. Topologically, residues 553-571 (ATFVTHAYASGNNLKPAEA) are extracellular. The helical transmembrane segment at 572 to 592 (FASLSLFHILVTPLFLLSTVV) threads the bilayer. Topologically, residues 593–990 (RFAVKAIISV…TCWRYLTSGG (398 aa)) are cytoplasmic. The ABC transporter 1 domain maps to 672–912 (IKVTNGYFSW…DVELYEHWKT (241 aa)). ATP is bound at residue 705–712 (GQVGCGKS). The tract at residues 944 to 967 (REAKAQMEDEDEEEEEEEDEDDNM) is disordered. The segment covering 951–966 (EDEDEEEEEEEDEDDN) has biased composition (acidic residues). The helical transmembrane segment at 991–1011 (FFLLILMIFSKLLKHSVIVAI) threads the bilayer. The ABC transmembrane type-1 2 domain maps to 994-1274 (LILMIFSKLL…VVRNLADLEV (281 aa)). Topologically, residues 1012-1034 (DYWLATWTSEYSINNTGKADQTY) are extracellular. A helical transmembrane segment spans residues 1035–1055 (YVAGFSILCGAGIFLCLVTSL). Residues 1056-1127 (TVEWMGLTAA…TLLCLSAIGM (72 aa)) lie on the Cytoplasmic side of the membrane. The chain crosses the membrane as a helical span at residues 1128–1148 (ISYATPVFLVALLPLGVAFYF). Topologically, residues 1149-1245 (IQKYFRVASK…IASISGSSNS (97 aa)) are extracellular. The chain crosses the membrane as a helical span at residues 1246–1266 (GLVGLGLLYALTITNYLNWVV). Residues 1267–1549 (RNLADLEVQM…LFSTLVMTNK (283 aa)) are Cytoplasmic-facing. Residues 1312 to 1546 (IKIHDLCVRY…KNGLFSTLVM (235 aa)) form the ABC transporter 2 domain. 1346–1353 (GRTGSGKS) contacts ATP.

The protein belongs to the ABC transporter superfamily. ABCC family. Conjugate transporter (TC 3.A.1.208) subfamily. As to quaternary structure, interacts with KCNJ11. Interacts with KCNJ8.

The protein localises to the membrane. Functionally, subunit of ATP-sensitive potassium channels (KATP). Can form cardiac and smooth muscle-type KATP channels with KCNJ11. KCNJ11 forms the channel pore while ABCC9 is required for activation and regulation. Can form a sulfonylurea-sensitive but ATP-insensitive potassium channel with KCNJ8. The polypeptide is ATP-binding cassette sub-family C member 9 (ABCC9) (Homo sapiens (Human)).